A 617-amino-acid chain; its full sequence is Probable Xaa-Pro aminopeptidase P (617 aa).

Mn(2+) contacts are provided by Asp414, Asp425, Glu523, and Glu537.

The protein belongs to the peptidase M24B family. Requires Mn(2+) as cofactor.

The catalysed reaction is Release of any N-terminal amino acid, including proline, that is linked to proline, even from a dipeptide or tripeptide.. Functionally, catalyzes the removal of a penultimate prolyl residue from the N-termini of peptides. The polypeptide is Probable Xaa-Pro aminopeptidase P (AMPP) (Ajellomyces capsulatus (strain NAm1 / WU24) (Darling's disease fungus)).